The sequence spans 210 residues: Pyridoxine/pyridoxamine 5'-phosphate oxidase (210 aa).

Substrate is bound by residues 7 to 10 (REDY) and Lys-65. Residues 60 to 65 (RMVLLK), 75 to 76 (FT), Arg-81, Lys-82, and Gln-104 each bind FMN. Residues Tyr-122, Arg-126, and Ser-130 each coordinate substrate. FMN is bound by residues 139–140 (QS) and Trp-183. 189-191 (RLH) lines the substrate pocket. Residue Arg-193 participates in FMN binding.

It belongs to the pyridoxamine 5'-phosphate oxidase family. As to quaternary structure, homodimer. FMN is required as a cofactor.

The enzyme catalyses pyridoxamine 5'-phosphate + O2 + H2O = pyridoxal 5'-phosphate + H2O2 + NH4(+). It carries out the reaction pyridoxine 5'-phosphate + O2 = pyridoxal 5'-phosphate + H2O2. It participates in cofactor metabolism; pyridoxal 5'-phosphate salvage; pyridoxal 5'-phosphate from pyridoxamine 5'-phosphate: step 1/1. It functions in the pathway cofactor metabolism; pyridoxal 5'-phosphate salvage; pyridoxal 5'-phosphate from pyridoxine 5'-phosphate: step 1/1. In terms of biological role, catalyzes the oxidation of either pyridoxine 5'-phosphate (PNP) or pyridoxamine 5'-phosphate (PMP) into pyridoxal 5'-phosphate (PLP). The sequence is that of Pyridoxine/pyridoxamine 5'-phosphate oxidase from Neisseria meningitidis serogroup B (strain ATCC BAA-335 / MC58).